The following is a 50-amino-acid chain: Thrombin-like enzyme BpirSP41 (50 aa).

Residues 1–50 (VVGGDECDINEHPFLAFLYSHGYFCGLTLINQEWVLTAAHCDRRFMRIYL) form the Peptidase S1 domain. Residues C25 and C41 are joined by a disulfide bond. The active-site Charge relay system is H40.

The protein belongs to the peptidase S1 family. Snake venom subfamily. As to quaternary structure, monomer. N-glycosylated. Expressed by the venom gland.

It localises to the secreted. Its activity is regulated as follows. Inhibited by serine protease inhibitors PMSF, benzamidine, leupeptin and aprotinin, as well as by copper ions (Cu2+). Not inhibited by metalloprotease inhibitors EDTA, EGTA and 1,10-phenanthroline, as well as by barium (Ba2+) and calcium ion (Ca2+). Functionally, snake venom serine protease that interferes with the hemostatic system of the prey. It almost completely degrades both Aalpha (FGA) and Bbeta (FGB) chains of fibrinogen. It presents a higher ability to degrade fibrin clots than BpirSP27. It hydrolyzes chromogenic substrates S-2238 (used for testing thrombin activity), S-2222 (factor Xa), S-2266 (glandular kallikrein and factor XIa), and S-2302 (plasma kallikrein, factor XIa and XIIa). It shows a decrease in the clotting time of human plasma in the presence of increasing doses of the enzyme. Its minimum coagulant dose (MCD) is 20 ug. It promotes platelet aggregation with a maximum of aggregation of 20%, regardless of the concentration increase or the presence of calcium. It also shows 40% inhibition of the hemolytic activity promoted by the complement pathways and possess only a minor role in the induction of edema and pain in rat. This is Thrombin-like enzyme BpirSP41 from Bothrops pirajai (Piraja's lancehead).